The primary structure comprises 1623 residues: MRKRHLRLGQQMWALLCKNWLRKFRMRRETLLEWLFSLLLILFVYQLSSNLHQVHDAPEMSVVDLGRVDNFNDSNYMMVFAPESEATHEIMNKVASAPFMKGRTIVACPDEKSMNELDLNYSIDAVRVIFKDTFSYHLKFSWGQRIPKTKEHKDHSAPCEPLNNKMICENSAFWEKGFVAFQAAINAGIIEMITNHSVMEELMSVIGSNMKMPPFIAQGGVATDFFIFFCVISFSSLIYYLSVNITQERQYMTTLMAMMGLRESAFWLSWSLMYAGFILVVAVLMSLIVKSAQVVVLTGFMVVFLLFLFYGLSLITLSFLMSVLIKKPFLTGLAIFILTVFWGSLGFTALYKHLPAFVEWTLCFLSPFAFTTGMAQLIHLDYDVNSNVNLNSPNNSYLIMATLFMLVLDALLYLVLALYFDKITLSKYGHQRSPLFFLKSSYWFKRRGASHVVLENEIDSDPSLNDSLEPVSPEFQGKEAIRIKNLKKEYSGKHGKVEALRGLGFDIYEGQITALLGHSGAGKTTLINTLSGLSPPTTGSVTIYNQTVSEMDDSDAVLTITGVCPQSNVQFGFLTVRENLRLFAKIKGILPHEVEQEVQQVLQDLEMENIQDILAQNLSGGQKRKLTLGIAILGDPQVLLLDEPTAGLDPLSRHRIWNLLKERRAGRVIVFSTQFMDEADILADRKVFISNGRLKCAGSSLFLKKKWGIGYHLSLHLNEACDPEGITSLVKKHISDARLTTQSEERLVYILPLERTNKFPDLYRDLDRCSNQGIEDYGVSMTTLNEVFLKLEGKSMADESDVGICGRLQSDGARDMESLVELEQVLSLDSSGSSVSGMALWRQQLCAVAKVRFFKLKNERKSLMTVLLLFGISFVPQLLEHLVYKVYHKSYSWGLSPSMYFLSPGQPPQDPLTHLLVINRTGSSIDNFVHALRQQGIALDLDALGTRNGTEEALYNGAITVLGEEKALRFSVACNAKRLNCFPVLMDIISNGLLGIFNSSERIQTDRSTVFEEHMLYEYGFMSNAFFWIPVAASLTPYIAMGSISDHKKKVLSQLWTSGLYPSAYWCGQALVDIPIYFLILFLMQIMDSVFSSEEFISVMESLLIQIPCSIGYASSLIFMTYVISFIFRNGRKNSGIWSFFFLIVTIFFIIATDINEYGFLELLICTFLVPPFTLIGSLLIFSEVSYDSVDYLGTSESQLVFLALLIPYLHFLLFFFILRCLERYLRKKSLRVDPVFRISPRSCPAVPNPEEPGEEDEDVQMERVRTTGAMATLQTDEKPVIIASCLRKEYIGRTKRCFSKMKKKIATRNISFCVKKGEVLGLLGHNGAGKSTTISMITGDTIPTAGQVFLKGSGGGAALGFLGYCPQENVLWPNLTVKEHLELYAAVKGLKKKDAVVTITRLVNALKLQDHLKALVRTLSEGVKRKLCFVLSILGNPPVVLLDEPSTGMDPEGQQQMWQAIRATFTNTERGALLTTHYMAEAEAVCDRVAIMVSGRLRCIGSIQHLKSKFGKDYLLEMKVKTPSQVEPLNTEIMRLFPQAARQERYSSLMVYKLPVEDVRPLSEAFFKLERLKENFDLEEYSLSQSTLEQVFLELSKEQELDDFGEEANSSVKWKLLPQEEL.

Residues 31-51 (LLEWLFSLLLILFVYQLSSNL) traverse the membrane as a helical segment. N120 carries N-linked (GlcNAc...) asparagine glycosylation. Helical transmembrane passes span 225–245 (FFIF…SVNI), 265–285 (AFWL…AVLM), 295–315 (VVLT…LSLI), 329–349 (FLTG…GFTA), 354–374 (LPAF…TTGM), and 398–418 (LIMA…VLAL). Residues 481-716 (IRIKNLKKEY…WGIGYHLSLH (236 aa)) form the ABC transporter 1 domain. 517 to 524 (GHSGAGKT) lines the ATP pocket. The next 7 helical transmembrane spans lie at 863–883 (LMTV…EHLV), 1025–1045 (AFFW…GSIS), 1071–1091 (LVDI…DSVF), 1107–1127 (IPCS…ISFI), 1135–1155 (SGIW…ATDI), 1163–1183 (LLIC…LIFS), and 1199–1219 (QLVF…FFIL). The 234-residue stretch at 1287–1520 (LRKEYIGRTK…FGKDYLLEMK (234 aa)) folds into the ABC transporter 2 domain. 1325–1332 (GHNGAGKS) provides a ligand contact to ATP.

The protein belongs to the ABC transporter superfamily. ABCA family. As to expression, highly expressed in heart and to lower extent in kidney, brain and spleen. Weakly expressed in developing and adult brains. Weakly expressed in the cerebellar granular layer at P14 and P21.

Its subcellular location is the membrane. Functionally, transporter that may play a role in monocyte differentiation and lipid transport and homeostasis. This chain is ATP-binding cassette sub-family A member 9 (Abca9), found in Mus musculus (Mouse).